Consider the following 463-residue polypeptide: MSVLIVGMSHRSAPVSLLERLSMDDSVRGETTQALLGRASLSEALIVSTCNRLEVYTVTSSFHTGVNDVVEVLHEASGVDIETLRGYLYVRYADAAAEHMLVVTSGLDSMVLGEQQIIGQVRTAYQAANEYGSVGPALHSLTQTALHTGKRVHSETAIDDAGASMVSFAVDRALVQMGLDSEAEAPLSGKTALVLGAGAMSSLAATHLGRAGISNLIMANRTLERAERLAEHSLEAGVPAEVVEYDQRASAYNRVDLVVSATGADDFTVKPEDIPEGASLMLVDLSMPRDIDDACADLPGVDLVNIERLHKASREGGSGMAPSEEEALAIVREELDSFTSEQRIRDIVPAVSALRRQAASVGSDELDRLRQRAPGISEVEWGEVEKTVRRVVDKLLHEPTVRVKELAARSGSISYDSALQELFGLESLASTAAPATTSVNASELPDAGIVAFVNAPSATQTRE.

Substrate is bound by residues Thr49 to Arg52, Ser109, Glu114 to Gln116, and Gln120. The active-site Nucleophile is the Cys50. Gly196–Ser201 is a binding site for NADP(+).

Belongs to the glutamyl-tRNA reductase family. As to quaternary structure, homodimer.

It carries out the reaction (S)-4-amino-5-oxopentanoate + tRNA(Glu) + NADP(+) = L-glutamyl-tRNA(Glu) + NADPH + H(+). The protein operates within porphyrin-containing compound metabolism; protoporphyrin-IX biosynthesis; 5-aminolevulinate from L-glutamyl-tRNA(Glu): step 1/2. In terms of biological role, catalyzes the NADPH-dependent reduction of glutamyl-tRNA(Glu) to glutamate 1-semialdehyde (GSA). This chain is Glutamyl-tRNA reductase, found in Corynebacterium glutamicum (strain ATCC 13032 / DSM 20300 / JCM 1318 / BCRC 11384 / CCUG 27702 / LMG 3730 / NBRC 12168 / NCIMB 10025 / NRRL B-2784 / 534).